Consider the following 530-residue polypeptide: Phosphoenolpyruvate carboxykinase (ATP) (530 aa).

Arginine 60, tyrosine 195, and lysine 201 together coordinate substrate. Residues lysine 201, histidine 221, and 237–245 contribute to the ATP site; that span reads GLSGTGKTT. 2 residues coordinate Mn(2+): lysine 201 and histidine 221. Residue aspartate 258 coordinates Mn(2+). ATP-binding positions include glutamate 286, arginine 324, 443–444, and serine 449; that span reads RI. Arginine 324 serves as a coordination point for substrate.

Belongs to the phosphoenolpyruvate carboxykinase (ATP) family. Requires Mn(2+) as cofactor.

The protein localises to the cytoplasm. It carries out the reaction oxaloacetate + ATP = phosphoenolpyruvate + ADP + CO2. The protein operates within carbohydrate biosynthesis; gluconeogenesis. Involved in the gluconeogenesis. Catalyzes the conversion of oxaloacetate (OAA) to phosphoenolpyruvate (PEP) through direct phosphoryl transfer between the nucleoside triphosphate and OAA. In Pelobacter propionicus (strain DSM 2379 / NBRC 103807 / OttBd1), this protein is Phosphoenolpyruvate carboxykinase (ATP).